Consider the following 365-residue polypeptide: S-adenosylmethionine:tRNA ribosyltransferase-isomerase (365 aa).

It belongs to the QueA family. As to quaternary structure, monomer.

It localises to the cytoplasm. It catalyses the reaction 7-aminomethyl-7-carbaguanosine(34) in tRNA + S-adenosyl-L-methionine = epoxyqueuosine(34) in tRNA + adenine + L-methionine + 2 H(+). The protein operates within tRNA modification; tRNA-queuosine biosynthesis. Transfers and isomerizes the ribose moiety from AdoMet to the 7-aminomethyl group of 7-deazaguanine (preQ1-tRNA) to give epoxyqueuosine (oQ-tRNA). The polypeptide is S-adenosylmethionine:tRNA ribosyltransferase-isomerase (Rickettsia conorii (strain ATCC VR-613 / Malish 7)).